Reading from the N-terminus, the 453-residue chain is Secreted aspartic protease 10 (453 aa).

Positions 1-20 (MDLVIMNFVFLLYLTSVVKC) are cleaved as a signal peptide. A Peptidase A1 domain is found at 52-372 (YTTELEIGSN…DLQDMTISVA (321 aa)). Residue Asp-70 is part of the active site. Position 70–72 (70–72 (DTG)) interacts with pepstatin A. A disulfide bridge links Cys-85 with Cys-112. Residues Asn-115 and Asn-128 are each glycosylated (N-linked (GlcNAc...) asparagine). 138–139 (VD) is a binding site for pepstatin A. Asn-168, Asn-208, Asn-211, and Asn-245 each carry an N-linked (GlcNAc...) asparagine glycan. Asp-266 is a catalytic residue. Pepstatin A is bound at residue 266 to 270 (DTGST). N-linked (GlcNAc...) asparagine glycosylation occurs at Asn-287. Cys-301 and Cys-333 are disulfide-bonded. Residues 387–432 (NPNEDQNEVPTSTSFTQSASSSGSQPSSTISGENMDKNTTSSSSGN) are disordered. Over residues 397 to 417 (TSTSFTQSASSSGSQPSSTIS) the composition is skewed to low complexity. Residues 423–432 (KNTTSSSSGN) show a composition bias toward polar residues. A glycan (N-linked (GlcNAc...) asparagine) is linked at Asn-424. Ser-429 carries GPI-anchor amidated serine lipidation. The propeptide at 430 to 453 (SGNCQTRSWIAILSALFLVYIHII) is removed in mature form.

The protein belongs to the peptidase A1 family. Post-translationally, the GPI-anchor is attached to the protein in the endoplasmic reticulum and serves to target the protein to the cell surface. There, the glucosamine-inositol phospholipid moiety is cleaved off and the GPI-modified mannoprotein is covalently attached via its lipidless GPI glycan remnant to the 1,6-beta-glucan of the outer cell wall layer.

Its subcellular location is the secreted. It localises to the cell membrane. The enzyme catalyses Preferential cleavage at the carboxyl of hydrophobic amino acids, but fails to cleave 15-Leu-|-Tyr-16, 16-Tyr-|-Leu-17 and 24-Phe-|-Phe-25 of insulin B chain. Activates trypsinogen, and degrades keratin.. Secreted aspartic peptidases (SAPs) are a group of ten acidic hydrolases considered as key virulence factors. These enzymes supply the fungus with nutrient amino acids as well as are able to degrade the selected host's proteins involved in the immune defense. Required for cell surface integrity and cell separation during budding. This Candida albicans (strain SC5314 / ATCC MYA-2876) (Yeast) protein is Secreted aspartic protease 10.